The primary structure comprises 251 residues: DNA repair protein RecO (251 aa).

It belongs to the RecO family.

Functionally, involved in DNA repair and RecF pathway recombination. The polypeptide is DNA repair protein RecO (Streptococcus mutans serotype c (strain ATCC 700610 / UA159)).